We begin with the raw amino-acid sequence, 318 residues long: MCSGNQTSQNQTASTDFTLTGLFAESKHAALLYTVTFLLFLMALTGNALLILLIHSEPRLHTPMYFFISQLALMDLMYLCVTVPKMLVGQVTGDDTISPSGCGIQMFFYLTLAGAEVFLLAAMAYDRYAAVCRPLHYPLLMNQRVCQLLVSACWVLGMVDGLLLTPITMSFPFCQSRKILSFFCETPALLKLSCSDVSLYKTLMYLCCILMLLAPIMVISSSYTLILHLIHRMNSAAGHRKALATCSSHMIIVLLLFGASFYTYMLPSSYHTAEQDMMVSAFYTIFTPVLNPLIYSLRNKDVTRALRSMMQSRMNQEK.

Over M1–A30 the chain is Extracellular. N5 and N10 each carry an N-linked (GlcNAc...) asparagine glycan. The chain crosses the membrane as a helical span at residues L31–I54. The Cytoplasmic portion of the chain corresponds to H55 to T62. The chain crosses the membrane as a helical span at residues P63–P84. The Extracellular segment spans residues K85–Q105. Residues C102 and C194 are joined by a disulfide bond. Residues M106 to Y125 traverse the membrane as a helical segment. Residues D126–R144 are Cytoplasmic-facing. A helical membrane pass occupies residues V145–L163. Residues L164–Y200 lie on the Extracellular side of the membrane. The chain crosses the membrane as a helical span at residues K201–T224. Residues L225–K241 are Cytoplasmic-facing. Residues A242–Y264 traverse the membrane as a helical segment. The Extracellular segment spans residues M265–M277. The chain crosses the membrane as a helical span at residues M278–L297. The Cytoplasmic portion of the chain corresponds to R298–K318.

It belongs to the G-protein coupled receptor 1 family.

It is found in the cell membrane. Functionally, odorant receptor. The chain is Olfactory receptor 2T3 (OR2T3) from Homo sapiens (Human).